The following is a 467-amino-acid chain: Acid phosphatase PHO12 (467 aa).

A signal peptide spans 1 to 17; it reads MLKSAVYSILAASLVNA. The Nucleophile role is filled by His75. 5 N-linked (GlcNAc...) asparagine glycosylation sites follow: Asn97, Asn162, Asn192, Asn250, and Asn315. Asp338 functions as the Proton donor in the catalytic mechanism. N-linked (GlcNAc...) asparagine glycosylation is found at Asn356, Asn390, Asn439, Asn445, and Asn461.

Belongs to the histidine acid phosphatase family. Post-translationally, glycosylated during secretion across the membrane.

It carries out the reaction a phosphate monoester + H2O = an alcohol + phosphate. This chain is Acid phosphatase PHO12 (PHO12), found in Saccharomyces cerevisiae (strain ATCC 204508 / S288c) (Baker's yeast).